The chain runs to 149 residues: Down syndrome critical region protein 9 (149 aa).

Residues 1–41 (MGRICPVNSRARRLRARPGRPSGDSLPYHQLQGGAPRLWSP) are disordered.

As to expression, testis specific.

In Homo sapiens (Human), this protein is Down syndrome critical region protein 9 (DSCR9).